The sequence spans 409 residues: Ribose-phosphate pyrophosphokinase 3, chloroplastic (409 aa).

2 stretches are compositionally biased toward low complexity: residues 1 to 16 (MATAASASASASPAAA) and 34 to 43 (PASAFARPSP). The disordered stretch occupies residues 1 to 43 (MATAASASASASPAAAFGAKTRRPGPSPSPSPSPASAFARPSP). The N-terminal 44 residues, 1–44 (MATAASASASASPAAAFGAKTRRPGPSPSPSPSPASAFARPSPR), are a transit peptide targeting the chloroplast. Residues aspartate 229 and histidine 231 each coordinate Mg(2+). The binding of phosphoribosylpyrophosphate stretch occupies residues 312–327 (GRHVVIVDDLVQSGGT).

Belongs to the ribose-phosphate pyrophosphokinase family. Requires Mg(2+) as cofactor.

The protein resides in the plastid. Its subcellular location is the chloroplast. The enzyme catalyses D-ribose 5-phosphate + ATP = 5-phospho-alpha-D-ribose 1-diphosphate + AMP + H(+). The protein is Ribose-phosphate pyrophosphokinase 3, chloroplastic of Oryza sativa subsp. japonica (Rice).